The primary structure comprises 219 residues: Ribose-5-phosphate isomerase A (219 aa).

Substrate-binding positions include 28 to 31, 81 to 84, and 94 to 97; these read SGST, DGAD, and KGGG. The Proton acceptor role is filled by Glu103. Lys121 contacts substrate.

It belongs to the ribose 5-phosphate isomerase family. Homodimer.

It carries out the reaction aldehydo-D-ribose 5-phosphate = D-ribulose 5-phosphate. It functions in the pathway carbohydrate degradation; pentose phosphate pathway; D-ribose 5-phosphate from D-ribulose 5-phosphate (non-oxidative stage): step 1/1. In terms of biological role, catalyzes the reversible conversion of ribose-5-phosphate to ribulose 5-phosphate. The chain is Ribose-5-phosphate isomerase A from Haemophilus ducreyi (strain 35000HP / ATCC 700724).